Consider the following 620-residue polypeptide: Chaperone protein DnaK (620 aa).

Positions 579–620 (KAQKEASAGAEASEDASGPSSTGSASDDDVVDADYEVVDEDK) are disordered. Residues 583-603 (EASAGAEASEDASGPSSTGSA) show a composition bias toward low complexity. Positions 604 to 620 (SDDDVVDADYEVVDEDK) are enriched in acidic residues.

Belongs to the heat shock protein 70 family.

Its function is as follows. Acts as a chaperone. The polypeptide is Chaperone protein DnaK (Methanococcoides burtonii (strain DSM 6242 / NBRC 107633 / OCM 468 / ACE-M)).